The sequence spans 152 residues: Sec-independent protein translocase protein TatB (152 aa).

The helical transmembrane segment at M1–G21 threads the bilayer.

It belongs to the TatB family. The Tat system comprises two distinct complexes: a TatABC complex, containing multiple copies of TatA, TatB and TatC subunits, and a separate TatA complex, containing only TatA subunits. Substrates initially bind to the TatABC complex, which probably triggers association of the separate TatA complex to form the active translocon.

It is found in the cell inner membrane. Its function is as follows. Part of the twin-arginine translocation (Tat) system that transports large folded proteins containing a characteristic twin-arginine motif in their signal peptide across membranes. Together with TatC, TatB is part of a receptor directly interacting with Tat signal peptides. TatB may form an oligomeric binding site that transiently accommodates folded Tat precursor proteins before their translocation. In Acinetobacter baylyi (strain ATCC 33305 / BD413 / ADP1), this protein is Sec-independent protein translocase protein TatB.